The following is a 205-amino-acid chain: Beta-crystallin B2 (205 aa).

Alanine 2 is subject to N-acetylalanine. An N-terminal arm region spans residues 2–16; the sequence is ASDHQTQAGKPQPLN. Beta/gamma crystallin 'Greek key' domains are found at residues 17-56 and 57-101; these read PKII…LVQA and GPWV…RPIK. The interval 102–106 is connecting peptide; the sequence is VDSQE. Beta/gamma crystallin 'Greek key' domains follow at residues 107–148 and 149–191; these read HKII…RVQS and GTWV…RRIR. The C-terminal arm stretch occupies residues 193–205; sequence MQWHQRGAFHPSN.

Belongs to the beta/gamma-crystallin family. Homo/heterodimer, or complexes of higher-order. The structure of beta-crystallin oligomers seems to be stabilized through interactions between the N-terminal arms.

Crystallins are the dominant structural components of the vertebrate eye lens. The sequence is that of Beta-crystallin B2 (CRYBB2) from Canis lupus familiaris (Dog).